Reading from the N-terminus, the 488-residue chain is MSIPGVNASFSSTPERLNSPVTIPAVMFIFGVVGNLVAIVVLCKSRKEQKETTFYTLVCGLAVTDLLGTLLVSPVTIATYMKGQWPGDQALCDYSTFILLFFGLSGLSIICAMSIERYLAINHAYFYSHYVDKRLAGLTLFAVYASNVLFCALPNMGLGRSERQYPGTWCFIDWTTNVTAYAAFSYMYAGFSSFLILATVLCNVLVCGALLRMLRQFMRRTSLGTEQHHAAAAAAVASVACRGHAAASPALQRLSDFRRRRSFRRIAGAEIQMVILLIATSLVVLICSIPLVVRVFINQLYQPSVVKDISRNPDLQAIRIASVNPILDPWIYILLRKTVLSKAIEKIKCLFCRIGGSGRDGSAQHCSESRRTSSAMSGHSRSFLSRELREISSTSHTLLYLPDLTESSLGGKNLLPGTHGMGLTQADTTSLRTLRISETSDSSQGQDSESVLLVDEVSGSQREEPASKGNSLQVTFPSETLKLSEKCI.

The Extracellular portion of the chain corresponds to 1–19; it reads MSIPGVNASFSSTPERLNS. Asparagine 7 carries N-linked (GlcNAc...) asparagine glycosylation. The helical transmembrane segment at 20-43 threads the bilayer; sequence PVTIPAVMFIFGVVGNLVAIVVLC. At 44-55 the chain is on the cytoplasmic side; sequence KSRKEQKETTFY. A helical membrane pass occupies residues 56–79; sequence TLVCGLAVTDLLGTLLVSPVTIAT. At 80–96 the chain is on the extracellular side; it reads YMKGQWPGDQALCDYST. The cysteines at positions 92 and 170 are disulfide-linked. A helical membrane pass occupies residues 97 to 115; sequence FILLFFGLSGLSIICAMSI. Residues 116–135 are Cytoplasmic-facing; the sequence is ERYLAINHAYFYSHYVDKRL. A helical transmembrane segment spans residues 136-160; the sequence is AGLTLFAVYASNVLFCALPNMGLGR. Topologically, residues 161–184 are extracellular; that stretch reads SERQYPGTWCFIDWTTNVTAYAAF. The helical transmembrane segment at 185-211 threads the bilayer; the sequence is SYMYAGFSSFLILATVLCNVLVCGALL. The Cytoplasmic segment spans residues 212–270; it reads RMLRQFMRRTSLGTEQHHAAAAAAVASVACRGHAAASPALQRLSDFRRRRSFRRIAGAE. A helical transmembrane segment spans residues 271 to 298; it reads IQMVILLIATSLVVLICSIPLVVRVFIN. The Extracellular portion of the chain corresponds to 299–315; the sequence is QLYQPSVVKDISRNPDL. Residues 316–335 form a helical membrane-spanning segment; the sequence is QAIRIASVNPILDPWIYILL. The Cytoplasmic portion of the chain corresponds to 336–488; the sequence is RKTVLSKAIE…ETLKLSEKCI (153 aa). Residues 358-380 are disordered; the sequence is GRDGSAQHCSESRRTSSAMSGHS. A phosphoserine mark is found at serine 377, serine 380, serine 382, and serine 385.

Belongs to the G-protein coupled receptor 1 family. In terms of assembly, interacts with FEM1A. Post-translationally, phosphorylation mediates agonist-mediated desensitization by promoting cytoplasmic retention.

The protein localises to the cell membrane. In terms of biological role, receptor for prostaglandin E2 (PGE2). The activity of this receptor is mediated by G(s) proteins that stimulate adenylate cyclase. Has a relaxing effect on smooth muscle. May play an important role in regulating renal hemodynamics, intestinal epithelial transport, adrenal aldosterone secretion, and uterine function. The chain is Prostaglandin E2 receptor EP4 subtype (Ptger4) from Rattus norvegicus (Rat).